The chain runs to 556 residues: Undecaprenyl phosphate-alpha-4-amino-4-deoxy-L-arabinose arabinosyl transferase (556 aa).

10 helical membrane passes run 88 to 108, 116 to 136, 179 to 199, 207 to 227, 258 to 278, 296 to 316, 319 to 339, 355 to 375, 384 to 404, and 410 to 430; these read FASV…AMML, LLAA…TYSV, FMTK…PVAL, LLLF…PWAL, APFW…LALL, FFLL…KGKL, YILP…SGLA, IVFG…IIVP, LTII…AVSL, and WGYL…GSIP.

This sequence belongs to the glycosyltransferase 83 family.

The protein localises to the cell inner membrane. It catalyses the reaction 4-amino-4-deoxy-alpha-L-arabinopyranosyl di-trans,octa-cis-undecaprenyl phosphate + lipid IVA = lipid IIA + di-trans,octa-cis-undecaprenyl phosphate.. The protein operates within lipopolysaccharide metabolism; 4-amino-4-deoxy-beta-L-arabinose-lipid A biosynthesis. Its function is as follows. Catalyzes the transfer of the L-Ara4N moiety of the glycolipid undecaprenyl phosphate-alpha-L-Ara4N to lipid A. The modified arabinose is attached to lipid A and is required for resistance to polymyxin and cationic antimicrobial peptides. This is Undecaprenyl phosphate-alpha-4-amino-4-deoxy-L-arabinose arabinosyl transferase from Pectobacterium atrosepticum (strain SCRI 1043 / ATCC BAA-672) (Erwinia carotovora subsp. atroseptica).